The primary structure comprises 429 residues: UDP-N-acetylglucosamine 1-carboxyvinyltransferase (429 aa).

Residue 22 to 23 participates in phosphoenolpyruvate binding; sequence KN. Position 93 (Arg-93) interacts with UDP-N-acetyl-alpha-D-glucosamine. Cys-117 functions as the Proton donor in the catalytic mechanism. A 2-(S-cysteinyl)pyruvic acid O-phosphothioketal modification is found at Cys-117. UDP-N-acetyl-alpha-D-glucosamine contacts are provided by residues 122-126, Asp-307, and Val-329; that span reads RPVDL.

It belongs to the EPSP synthase family. MurA subfamily.

The protein resides in the cytoplasm. The enzyme catalyses phosphoenolpyruvate + UDP-N-acetyl-alpha-D-glucosamine = UDP-N-acetyl-3-O-(1-carboxyvinyl)-alpha-D-glucosamine + phosphate. Its pathway is cell wall biogenesis; peptidoglycan biosynthesis. Functionally, cell wall formation. Adds enolpyruvyl to UDP-N-acetylglucosamine. The polypeptide is UDP-N-acetylglucosamine 1-carboxyvinyltransferase (Chloroherpeton thalassium (strain ATCC 35110 / GB-78)).